Here is a 461-residue protein sequence, read N- to C-terminus: Cysteine--tRNA ligase (461 aa).

Cysteine 28 contributes to the Zn(2+) binding site. A 'HIGH' region motif is present at residues 30-40 (ITVYDLCHIGH). Residues cysteine 209, histidine 234, and glutamate 238 each contribute to the Zn(2+) site. The short motif at 266 to 270 (KMSKS) is the 'KMSKS' region element. Lysine 269 contributes to the ATP binding site.

The protein belongs to the class-I aminoacyl-tRNA synthetase family. Monomer. It depends on Zn(2+) as a cofactor.

The protein localises to the cytoplasm. It catalyses the reaction tRNA(Cys) + L-cysteine + ATP = L-cysteinyl-tRNA(Cys) + AMP + diphosphate. In Escherichia coli (strain SMS-3-5 / SECEC), this protein is Cysteine--tRNA ligase.